A 199-amino-acid polypeptide reads, in one-letter code: Gamma-glutamylcyclotransferase 2-3 (199 aa).

A substrate-binding site is contributed by 5–10; the sequence is VFGYGS. Glutamate 86 serves as the catalytic Proton acceptor.

This sequence belongs to the gamma-glutamylcyclotransferase family. The cofactor is Mn(2+).

Its subcellular location is the cytoplasm. The catalysed reaction is glutathione = L-cysteinylglycine + 5-oxo-L-proline. Functionally, converts GSH to 5-oxoproline and cysteine-glycine (Cys-Gly) dipeptide in vitro and plays a significant role in glutathione (GSH) homeostasis. Has no activity towards gamma-glutamyl-L-cysteine but possesses very low activity towards gamma-glutamyl-L-alanine. This chain is Gamma-glutamylcyclotransferase 2-3, found in Arabidopsis thaliana (Mouse-ear cress).